The following is a 229-amino-acid chain: Carbonic anhydrase 2 (229 aa).

4 residues coordinate Zn(2+): C42, D44, H98, and C101.

The protein belongs to the beta-class carbonic anhydrase family. Requires Zn(2+) as cofactor.

The enzyme catalyses hydrogencarbonate + H(+) = CO2 + H2O. The sequence is that of Carbonic anhydrase 2 (can) from Haemophilus influenzae (strain ATCC 51907 / DSM 11121 / KW20 / Rd).